Here is a 513-residue protein sequence, read N- to C-terminus: GMP synthase [glutamine-hydrolyzing] (513 aa).

One can recognise a Glutamine amidotransferase type-1 domain in the interval threonine 3 to asparagine 192. Cysteine 80 serves as the catalytic Nucleophile. Residues histidine 166 and glutamate 168 contribute to the active site. The region spanning tryptophan 193–arginine 388 is the GMPS ATP-PPase domain. Serine 220–serine 226 serves as a coordination point for ATP.

As to quaternary structure, homodimer.

It catalyses the reaction XMP + L-glutamine + ATP + H2O = GMP + L-glutamate + AMP + diphosphate + 2 H(+). It functions in the pathway purine metabolism; GMP biosynthesis; GMP from XMP (L-Gln route): step 1/1. In terms of biological role, catalyzes the synthesis of GMP from XMP. The protein is GMP synthase [glutamine-hydrolyzing] of Thermosipho africanus (strain TCF52B).